Reading from the N-terminus, the 101-residue chain is NADH-quinone oxidoreductase subunit K (101 aa).

The next 3 membrane-spanning stretches (helical) occupy residues 4 to 24 (LSHF…GIFL), 30 to 50 (IVLL…FIAF), and 61 to 81 (VFVF…LAIL).

The protein belongs to the complex I subunit 4L family. As to quaternary structure, NDH-1 is composed of 14 different subunits. Subunits NuoA, H, J, K, L, M, N constitute the membrane sector of the complex.

It is found in the cell inner membrane. The enzyme catalyses a quinone + NADH + 5 H(+)(in) = a quinol + NAD(+) + 4 H(+)(out). Functionally, NDH-1 shuttles electrons from NADH, via FMN and iron-sulfur (Fe-S) centers, to quinones in the respiratory chain. The immediate electron acceptor for the enzyme in this species is believed to be ubiquinone. Couples the redox reaction to proton translocation (for every two electrons transferred, four hydrogen ions are translocated across the cytoplasmic membrane), and thus conserves the redox energy in a proton gradient. This is NADH-quinone oxidoreductase subunit K from Thiobacillus denitrificans (strain ATCC 25259 / T1).